The primary structure comprises 854 residues: DNA mismatch repair protein MutS (854 aa).

614–621 is a binding site for ATP; sequence GPNMGGKS.

The protein belongs to the DNA mismatch repair MutS family.

Its function is as follows. This protein is involved in the repair of mismatches in DNA. It is possible that it carries out the mismatch recognition step. This protein has a weak ATPase activity. This is DNA mismatch repair protein MutS from Sodalis glossinidius (strain morsitans).